We begin with the raw amino-acid sequence, 211 residues long: Glutathione S-transferase class-mu 28 kDa isozyme (211 aa).

Positions 4 to 86 (DHIKVIYFNG…YMAKKHHMMG (83 aa)) constitute a GST N-terminal domain. The glutathione site is built by Y10, R16, W41, K45, L53, E70, S71, and D104. In terms of domain architecture, GST C-terminal spans 88 to 211 (TEEEYYNVEK…YLSDRAATPF (124 aa)).

It belongs to the GST superfamily. Mu family. Homodimer.

The enzyme catalyses RX + glutathione = an S-substituted glutathione + a halide anion + H(+). Its function is as follows. Conjugation of reduced glutathione to a wide number of exogenous and endogenous hydrophobic electrophiles. In terms of biological role, GST isoenzymes appear to play a central role in the parasite detoxification system. Other functions are also suspected including a role in increasing the solubility of haematin in the parasite gut. This chain is Glutathione S-transferase class-mu 28 kDa isozyme, found in Schistosoma haematobium (Blood fluke).